The following is a 612-amino-acid chain: Threonine--tRNA ligase (612 aa).

The tract at residues 218-509 (DHRKLGVELG…LSEHFGGNFP (292 aa)) is catalytic. Residues cysteine 310, histidine 361, and histidine 486 each contribute to the Zn(2+) site.

It belongs to the class-II aminoacyl-tRNA synthetase family. In terms of assembly, homodimer. It depends on Zn(2+) as a cofactor.

It is found in the cytoplasm. It catalyses the reaction tRNA(Thr) + L-threonine + ATP = L-threonyl-tRNA(Thr) + AMP + diphosphate + H(+). In terms of biological role, catalyzes the attachment of threonine to tRNA(Thr) in a two-step reaction: L-threonine is first activated by ATP to form Thr-AMP and then transferred to the acceptor end of tRNA(Thr). Also edits incorrectly charged L-seryl-tRNA(Thr). The protein is Threonine--tRNA ligase of Helicobacter pylori (strain ATCC 700392 / 26695) (Campylobacter pylori).